Here is a 217-residue protein sequence, read N- to C-terminus: MKAVLILSGGMDSTTLLYDLIDQGYEVSAITFDYHQKHKKEIACAQKTCAKLSIPHKIVNLSVLNDLAPSSLTRADRDVPEGHYAEESMKQTVVPNRNMVFLSLAASYAIGIGAGHLFYAAHAGDHAIYPDCRPVFVSAMSTAFHLCDWNDLVLQVPYLMLSKGDIAKKGIGLGVDYANTWSCYKGKERSCGKCGACTERLEAFREAGAADPLEYEP.

7-17 is an ATP binding site; it reads LSGGMDSTTLL. Residues Cys-183, Cys-191, Cys-194, and Cys-197 each coordinate Zn(2+).

It belongs to the QueC family. Zn(2+) is required as a cofactor.

The enzyme catalyses 7-carboxy-7-deazaguanine + NH4(+) + ATP = 7-cyano-7-deazaguanine + ADP + phosphate + H2O + H(+). It functions in the pathway purine metabolism; 7-cyano-7-deazaguanine biosynthesis. In terms of biological role, catalyzes the ATP-dependent conversion of 7-carboxy-7-deazaguanine (CDG) to 7-cyano-7-deazaguanine (preQ(0)). This Methanoregula boonei (strain DSM 21154 / JCM 14090 / 6A8) protein is 7-cyano-7-deazaguanine synthase.